Consider the following 340-residue polypeptide: Putative esterase YheT (340 aa).

One can recognise an AB hydrolase-1 domain in the interval 73–312 (PRLVVFHGLE…TEHGGHVGFI (240 aa)). Residues Ser153, Asp280, and His308 each act as charge relay system in the active site.

This sequence belongs to the AB hydrolase superfamily. AB hydrolase 4 family.

In Escherichia coli (strain K12), this protein is Putative esterase YheT (yheT).